We begin with the raw amino-acid sequence, 157 residues long: SsrA-binding protein (157 aa).

Residues 135–157 (KRDTIKDREGKREVERAMKTNHR) are disordered.

The protein belongs to the SmpB family.

Its subcellular location is the cytoplasm. In terms of biological role, required for rescue of stalled ribosomes mediated by trans-translation. Binds to transfer-messenger RNA (tmRNA), required for stable association of tmRNA with ribosomes. tmRNA and SmpB together mimic tRNA shape, replacing the anticodon stem-loop with SmpB. tmRNA is encoded by the ssrA gene; the 2 termini fold to resemble tRNA(Ala) and it encodes a 'tag peptide', a short internal open reading frame. During trans-translation Ala-aminoacylated tmRNA acts like a tRNA, entering the A-site of stalled ribosomes, displacing the stalled mRNA. The ribosome then switches to translate the ORF on the tmRNA; the nascent peptide is terminated with the 'tag peptide' encoded by the tmRNA and targeted for degradation. The ribosome is freed to recommence translation, which seems to be the essential function of trans-translation. The polypeptide is SsrA-binding protein (Albidiferax ferrireducens (strain ATCC BAA-621 / DSM 15236 / T118) (Rhodoferax ferrireducens)).